Consider the following 146-residue polypeptide: Hemoglobin subunit beta (146 aa).

N-acetylvaline; partial is present on Val1. The Globin domain occupies 2–146; it reads HLTDAEKAAV…VANALAHKYH (145 aa). At Thr12 the chain carries Phosphothreonine. Lys59 is modified (N6-acetyllysine). Position 63 (His63) interacts with heme b. Lys82 is subject to N6-acetyllysine. His92 serves as a coordination point for heme b. Cys93 is modified (S-nitrosocysteine). Lys144 bears the N6-acetyllysine mark.

It belongs to the globin family. In terms of assembly, heterotetramer of two alpha chains and two beta chains. In terms of tissue distribution, red blood cells.

Involved in oxygen transport from the lung to the various peripheral tissues. The protein is Hemoglobin subunit beta (HBB) of Procavia capensis habessinica (Abyssinian hyrax).